Consider the following 424-residue polypeptide: Protein FAM43A (424 aa).

Residues 261–297 (QQEEELQEEEEEHLEDCLEEEEEEDGVGDGDPAEEEA) show a composition bias toward acidic residues. 2 disordered regions span residues 261–299 (QQEE…EAEA) and 382–424 (LLSG…PYSG). Positions 382–394 (LLSGESTGSESSI) are enriched in low complexity. A compositionally biased stretch (polar residues) spans 405–418 (SPGNPSGPADSTSL).

This sequence belongs to the FAM43 family.

The polypeptide is Protein FAM43A (Fam43a) (Mus musculus (Mouse)).